The primary structure comprises 217 residues: Ras-related protein RABA5b (217 aa).

Position 19-26 (19-26 (GDSAVGKS)) interacts with GTP. Residues 41 to 49 (SKATIGVEF) carry the Effector region motif. Residues 67–71 (DTAGQ), 125–128 (NKCD), and 155–156 (SA) each bind GTP. Residues C214 and C215 are each lipidated (S-geranylgeranyl cysteine).

It belongs to the small GTPase superfamily. Rab family.

It localises to the cell membrane. Intracellular vesicle trafficking and protein transport. In Arabidopsis thaliana (Mouse-ear cress), this protein is Ras-related protein RABA5b (RABA5B).